A 393-amino-acid chain; its full sequence is Acetyl-CoA acetyltransferase (393 aa).

The Acyl-thioester intermediate role is filled by Cys-88. Residues His-349 and Cys-379 each act as proton acceptor in the active site.

This sequence belongs to the thiolase-like superfamily. Thiolase family.

It is found in the cytoplasm. The catalysed reaction is 2 acetyl-CoA = acetoacetyl-CoA + CoA. Its pathway is metabolic intermediate biosynthesis; (R)-mevalonate biosynthesis; (R)-mevalonate from acetyl-CoA: step 1/3. The sequence is that of Acetyl-CoA acetyltransferase (atoB) from Pseudomonas aeruginosa (strain ATCC 15692 / DSM 22644 / CIP 104116 / JCM 14847 / LMG 12228 / 1C / PRS 101 / PAO1).